We begin with the raw amino-acid sequence, 572 residues long: NADH-ubiquinone oxidoreductase chain 5 (572 aa).

Transmembrane regions (helical) follow at residues 6-26, 44-64, 86-106, 107-127, 147-167, 179-201, 208-230, 234-254, 268-288, 291-311, 337-357, 372-394, 422-442, 454-474, 479-499, 524-544, and 552-572; these read FFFL…YLMI, VVMT…VMYI, IMIV…PNLI, SILL…IYYQ, VAIL…YIYY, IITL…SSWL, PTPV…LLIR, MLMV…TMFM, IIAL…SMGY, LAFF…MCAG, SICF…AGFY, NFFI…FRLF, IGLL…IFPV, FLTL…SDFV, LFSL…FMPF, WGEL…INYI, and FKVY…LFFL.

It belongs to the complex I subunit 5 family.

It is found in the mitochondrion inner membrane. It carries out the reaction a ubiquinone + NADH + 5 H(+)(in) = a ubiquinol + NAD(+) + 4 H(+)(out). In terms of biological role, core subunit of the mitochondrial membrane respiratory chain NADH dehydrogenase (Complex I) that is believed to belong to the minimal assembly required for catalysis. Complex I functions in the transfer of electrons from NADH to the respiratory chain. The immediate electron acceptor for the enzyme is believed to be ubiquinone. This Locusta migratoria (Migratory locust) protein is NADH-ubiquinone oxidoreductase chain 5 (ND5).